The primary structure comprises 335 residues: Glycerol-3-phosphate dehydrogenase [NAD(P)+] (335 aa).

The NADPH site is built by Ser10, Phe11, Arg31, and Lys105. Sn-glycerol 3-phosphate contacts are provided by Lys105, Gly136, and Ser138. Ala140 contacts NADPH. Positions 191, 244, 254, 255, and 256 each coordinate sn-glycerol 3-phosphate. Lys191 (proton acceptor) is an active-site residue. Arg255 serves as a coordination point for NADPH. Positions 279 and 281 each coordinate NADPH.

Belongs to the NAD-dependent glycerol-3-phosphate dehydrogenase family.

Its subcellular location is the cytoplasm. The enzyme catalyses sn-glycerol 3-phosphate + NAD(+) = dihydroxyacetone phosphate + NADH + H(+). It catalyses the reaction sn-glycerol 3-phosphate + NADP(+) = dihydroxyacetone phosphate + NADPH + H(+). It functions in the pathway membrane lipid metabolism; glycerophospholipid metabolism. Its function is as follows. Catalyzes the reduction of the glycolytic intermediate dihydroxyacetone phosphate (DHAP) to sn-glycerol 3-phosphate (G3P), the key precursor for phospholipid synthesis. This is Glycerol-3-phosphate dehydrogenase [NAD(P)+] from Leptospira borgpetersenii serovar Hardjo-bovis (strain JB197).